The chain runs to 416 residues: Major royal jelly protein 8 (416 aa).

The N-terminal stretch at 1 to 16 (MIRWLLLMYLGITCQG) is a signal peptide. N-linked (GlcNAc...) asparagine glycosylation is found at Asn24, Asn58, Asn93, Asn115, Asn158, Asn175, Asn196, and Asn215.

The protein belongs to the major royal jelly protein family. Expressed at very low levels in the hypopharyngeal glands of worker honey bees (at protein level). Secreted into bee venom in the sting apparatus (at protein level). Expressed in the spermatheca of adult queen bees (at protein level); expression levels are higher in mated queens than in virgin queens. Along with Mrjp9 expressed at very low levels in the head of worker bees compared to other major royal jelly proteins.

Its subcellular location is the secreted. Its function is as follows. Component of bee sting venom. Component of royal jelly, a substance produced in the hypopharyngeal gland containing proteins, free amino acids, fatty acids, sugars and other nutrients, which is fed to developing larvae by worker nurse bees; may be present only at trace levels. All larvae are fed some royal jelly (also known as worker jelly) early in their development but it forms the principal source of nutrition for larvae destined to become queen bees. Produced in the spermatheca of adult queen bees, along with other major royal jelly proteins, where it may act as a nutrient supply for sperm stored by mated queens, or be involved in energy metabolism. The chain is Major royal jelly protein 8 from Apis mellifera (Honeybee).